Here is a 261-residue protein sequence, read N- to C-terminus: MVVTIPQLQQWKRSGRAIAVLTAWDWLWASLLDQAGVDLILVGDSLAMVALGHKNTLPLSLDEMLHHTRAVCRGVQRALVVCDLPFGSYQESPQQAVRSASRVLKETPAQAVKLEGGYPAMVETVTHLVRAGIPVLGHVGLTPQSVHQYGGYPQQGKSVEAAERILSEAIALEQAGAFAIILEHIPADLGLTITQKLSIPTIGIGAGPHCDGQVLVTADALGLSERQPPFAKAYANLRETILQAVQEYCNEVQTHQFPGSG.

Residues aspartate 44 and aspartate 83 each contribute to the Mg(2+) site. Residues 44–45, aspartate 83, and lysine 113 contribute to the 3-methyl-2-oxobutanoate site; that span reads DS. Glutamate 115 lines the Mg(2+) pocket. The active-site Proton acceptor is the glutamate 183.

The protein belongs to the PanB family. In terms of assembly, homodecamer; pentamer of dimers. It depends on Mg(2+) as a cofactor.

It is found in the cytoplasm. The catalysed reaction is 3-methyl-2-oxobutanoate + (6R)-5,10-methylene-5,6,7,8-tetrahydrofolate + H2O = 2-dehydropantoate + (6S)-5,6,7,8-tetrahydrofolate. It participates in cofactor biosynthesis; (R)-pantothenate biosynthesis; (R)-pantoate from 3-methyl-2-oxobutanoate: step 1/2. Its function is as follows. Catalyzes the reversible reaction in which hydroxymethyl group from 5,10-methylenetetrahydrofolate is transferred onto alpha-ketoisovalerate to form ketopantoate. This is 3-methyl-2-oxobutanoate hydroxymethyltransferase from Cyanothece sp. (strain PCC 7425 / ATCC 29141).